A 349-amino-acid polypeptide reads, in one-letter code: N-acetyl-gamma-glutamyl-phosphate reductase (349 aa).

Residue cysteine 149 is part of the active site.

It belongs to the NAGSA dehydrogenase family. Type 1 subfamily.

The protein localises to the cytoplasm. The catalysed reaction is N-acetyl-L-glutamate 5-semialdehyde + phosphate + NADP(+) = N-acetyl-L-glutamyl 5-phosphate + NADPH + H(+). Its pathway is amino-acid biosynthesis; L-arginine biosynthesis; N(2)-acetyl-L-ornithine from L-glutamate: step 3/4. In terms of biological role, catalyzes the NADPH-dependent reduction of N-acetyl-5-glutamyl phosphate to yield N-acetyl-L-glutamate 5-semialdehyde. In Acinetobacter baumannii (strain SDF), this protein is N-acetyl-gamma-glutamyl-phosphate reductase.